The chain runs to 286 residues: Lipoyl synthase (286 aa).

The [4Fe-4S] cluster site is built by cysteine 29, cysteine 34, cysteine 40, cysteine 55, cysteine 59, cysteine 62, and serine 265. The region spanning tryptophan 41 to serine 254 is the Radical SAM core domain.

Belongs to the radical SAM superfamily. Lipoyl synthase family. The cofactor is [4Fe-4S] cluster.

Its subcellular location is the cytoplasm. The enzyme catalyses [[Fe-S] cluster scaffold protein carrying a second [4Fe-4S](2+) cluster] + N(6)-octanoyl-L-lysyl-[protein] + 2 oxidized [2Fe-2S]-[ferredoxin] + 2 S-adenosyl-L-methionine + 4 H(+) = [[Fe-S] cluster scaffold protein] + N(6)-[(R)-dihydrolipoyl]-L-lysyl-[protein] + 4 Fe(3+) + 2 hydrogen sulfide + 2 5'-deoxyadenosine + 2 L-methionine + 2 reduced [2Fe-2S]-[ferredoxin]. Its pathway is protein modification; protein lipoylation via endogenous pathway; protein N(6)-(lipoyl)lysine from octanoyl-[acyl-carrier-protein]: step 2/2. In terms of biological role, catalyzes the radical-mediated insertion of two sulfur atoms into the C-6 and C-8 positions of the octanoyl moiety bound to the lipoyl domains of lipoate-dependent enzymes, thereby converting the octanoylated domains into lipoylated derivatives. This is Lipoyl synthase from Sulfolobus acidocaldarius (strain ATCC 33909 / DSM 639 / JCM 8929 / NBRC 15157 / NCIMB 11770).